The primary structure comprises 172 residues: dCTP deaminase, dUMP-forming (172 aa).

DCTP contacts are provided by residues 93-98 (RSSVGR), D111, 119-121 (TLE), Q138, and Y151. Residue E121 is the Proton donor/acceptor of the active site.

Belongs to the dCTP deaminase family. Homotrimer.

The enzyme catalyses dCTP + 2 H2O = dUMP + NH4(+) + diphosphate. The protein operates within pyrimidine metabolism; dUMP biosynthesis; dUMP from dCTP: step 1/1. Its function is as follows. Bifunctional enzyme that catalyzes both the deamination of dCTP to dUTP and the hydrolysis of dUTP to dUMP without releasing the toxic dUTP intermediate. This is dCTP deaminase, dUMP-forming from Hathewaya histolytica (Clostridium histolyticum).